The chain runs to 496 residues: Cyclin-dependent kinase 16 (496 aa).

Residues 1-97 (MDRMKKIKRQ…TSSDEVQSPV (97 aa)) form a disordered region. Phosphoserine; by BRSK2 is present on Ser12. Residues Ser36, Ser42, Ser64, Ser65, Ser78, Ser82, and Ser89 each carry the phosphoserine modification. Basic and acidic residues predominate over residues 69 to 78 (IVHEDLKMGS). Positions 83–93 (DQASATSSDEV) are enriched in polar residues. Position 95 is a phosphoserine; by CDK5 (Ser95). Residues Ser110, Ser119, Ser138, Ser146, Ser153, and Ser155 each carry the phosphoserine modification. The 282-residue stretch at 165–446 (YIKLDKLGEG…AEDAMKHPFF (282 aa)) folds into the Protein kinase domain. ATP-binding positions include 171 to 179 (LGEGTYATV) and Lys194. A Phosphothreonine modification is found at Thr175. The active-site Proton acceptor is Asp286. Thr380 is subject to Phosphothreonine. A phosphoserine mark is found at Ser391, Ser478, and Ser480.

The protein belongs to the protein kinase superfamily. CMGC Ser/Thr protein kinase family. CDC2/CDKX subfamily. Found in a complex containing CABLES1, CDK17 and TDRD7. Interacts with BRSK2. Identified in a complex with NSF, syntaxin-1, synaptotagmin, SYN1, SYP and CDK5R1. Interacts with YWHAH, YWHAQ and YWHAZ. Interacts with CCNY; this interaction increases the CDK16 kinase activity. Interacts with CCNYL1; this interaction mutually increases the stability of CDK16 and CCNYL1 and increases the kinase activity of CDK16. Interacts with NSF. Post-translationally, phosphorylation of CDK16 is essential for the binding of CCNY, but also essential for the regulation of CDK16 kinase activity. Phosphorylation of CDK16 is essential for the binding of CCNYl1, but also essential for the regulation of CDK16 kinase activity. Ser-146 and Ser-153 are the most critical sites for the binding of CCNYL1 and for modulating CDK16 kinase activity. Phosphorylation at Ser-153 inhibits kinase activity. In terms of tissue distribution, detected in pancreas islets (at protein level). Detected in brain and pancreas.

The protein localises to the cytoplasm. It is found in the cytoplasmic vesicle. It localises to the secretory vesicle. Its subcellular location is the cell membrane. The protein resides in the synapse. The protein localises to the synaptosome. The enzyme catalyses L-seryl-[protein] + ATP = O-phospho-L-seryl-[protein] + ADP + H(+). The catalysed reaction is L-threonyl-[protein] + ATP = O-phospho-L-threonyl-[protein] + ADP + H(+). In terms of biological role, protein kinase that plays a role in vesicle-mediated transport processes and exocytosis. Regulates GH1 release by brain neurons. Phosphorylates NSF, and thereby regulates NSF oligomerization. Required for normal spermatogenesis. Regulates neuron differentiation and dendrite development. Plays a role in the regulation of insulin secretion in response to changes in blood glucose levels. Can phosphorylate CCNY at 'Ser-336' (in vitro). The polypeptide is Cyclin-dependent kinase 16 (CDK16) (Homo sapiens (Human)).